Consider the following 373-residue polypeptide: Exonuclease V (373 aa).

C92 is a binding site for [4Fe-4S] cluster. Mg(2+) is bound by residues D182 and E196. [4Fe-4S] cluster-binding residues include C343, C346, and C352.

Belongs to the EXO5 family. In terms of assembly, monomer; monomeric form has weak exonuclease activity. Homodimer; homodimeric form is unsure but has much higher exonuclease activity, suggesting that it could homodimerize upon DNA-binding. Interacts with the replication protein A (RPA) complex. [4Fe-4S] cluster is required as a cofactor. It depends on Mg(2+) as a cofactor.

Its subcellular location is the nucleus. It localises to the cytoplasm. It is found in the cytosol. Functionally, single-stranded DNA (ssDNA) bidirectional exonuclease involved in DNA repair. Probably involved in DNA repair following ultraviolet (UV) irradiation and interstrand cross-links (ICLs) damage. Has both 5'-3' and 3'-5' exonuclease activities with a strong preference for 5'-ends. Acts as a sliding exonuclease that loads at ssDNA ends and then slides along the ssDNA prior to cutting; however the sliding and the 3'-5' exonuclease activities are abolished upon binding to the replication protein A (RPA) complex that enforces 5'-directionality activity. This Homo sapiens (Human) protein is Exonuclease V (EXO5).